A 6298-amino-acid chain; its full sequence is Adhesion G-protein coupled receptor V1 (6298 aa).

The N-terminal stretch at 1 to 28 (MSVTSEPGMISSFLLVYLSTLFISFVFG) is a signal peptide. Calx-beta domains follow at residues 29 to 116 (EAEI…FHLT), 132 to 236 (ASVT…IQLR), 251 to 362 (VEII…IMLL), 389 to 489 (YGVL…LTIL), 646 to 746 (PAIA…TLSL), 764 to 862 (DLII…VILS), 877 to 980 (VNIT…IILL), 994 to 1094 (ASLR…IVLF), 1108 to 1208 (ATVI…LRLV), 1440 to 1540 (AMPR…FLLK), 1562 to 1662 (QKSD…VTLV), 1706 to 1805 (TGLP…VELL), 1846 to 1948 (ILVT…VSIL), 1962 to 2075 (TLTI…IELF), 2103 to 2202 (HLVI…VQLL), 2218 to 2320 (VITI…VQLA), 2437 to 2537 (TLCL…FLIS), 2576 to 2672 (FIIY…VRLG), 2687 to 2786 (VTVN…VVLY), 2810 to 2921 (LTVE…VNLT), 2945 to 3044 (QIVI…LLLT), and 3067 to 3167 (DGPG…VCTL). At 29-5901 (EAEIRFTGQT…TDNSSSYNEA (5873 aa)) the chain is on the extracellular side. EAR repeat units lie at residues 3251–3292 (VFSI…RWQG), 3293–3341 (TFVP…MLTA), 3344–3389 (RLVL…RWNG), 3391–3435 (NFAW…TWSG), 3437–3484 (QFIN…VWEM), and 3488–3530 (SLRY…CWNS). Calx-beta domains lie at 3581-3622 (QSDF…RVQL), 3636-3736 (SVRV…VVTL), 3772-3872 (GAVR…VTIA), 3919-4003 (GGVI…ISLV), 4017-4120 (VNVV…IELT), 4135-4235 (SVII…EFQL), 4251-4351 (ARIT…LAIT), 4384-4484 (RIII…ILLI), 4507-4607 (SPFG…IVQL), 4628-4728 (KFGD…AVQL), 4989-5089 (TTAE…INLT), 5281-5325 (AVEE…YVFL), and 5361-5461 (IGFS…FVEL). Positions 5740–5896 (SILALHWNPQ…AVYAQTDNSS (157 aa)) constitute a GAIN-B domain. 2 disulfides stabilise this stretch: Cys-5849–Cys-5878 and Cys-5866–Cys-5880. The GPS stretch occupies residues 5849–5896 (CLLWNQAAASWLSDSQFCKVVEDASDYVECACSHMSVYAVYAQTDNSS). The helical transmembrane segment at 5902–5922 (FFSAGLICISGLCLAVVSHMF) threads the bilayer. Over 5923-5932 (CARHSMFAAK) the chain is Cytoplasmic. Residues 5933–5953 (LLTHMMVASLGTQILFLASAY) form a helical membrane-spanning segment. The Extracellular portion of the chain corresponds to 5954 to 5973 (ASPHLSEESCSAVAAVAHYL). Residues 5974 to 5994 (YLCQFSWMLIQSVNFWYVLVV) form a helical membrane-spanning segment. Over 5995-6003 (SDEHTERRC) the chain is Cytoplasmic. The helical transmembrane segment at 6004–6024 (LLFCLLSWGLPSFVVILLILI) threads the bilayer. The Extracellular portion of the chain corresponds to 6025-6052 (LRGIYHRSMPQIYGLIHGDLCFIPNIYA). The chain crosses the membrane as a helical span at residues 6053–6073 (ALFTAALVPLMCLVVVFVVFI). Topologically, residues 6074–6097 (HAYQLKPQWKGYDDVFRGRTNAAE) are cytoplasmic. The helical transmembrane segment at 6098–6118 (IPLILYLFALISMTWLWGGLH) threads the bilayer. The Extracellular segment spans residues 6119–6126 (MAYGHFWM). Residues 6127 to 6147 (LVLFVIFNSLQGLYVFVVYFI) traverse the membrane as a helical segment. Topologically, residues 6148-6298 (LHNQTCCPMK…RRIPIADTHL (151 aa)) are cytoplasmic. Disordered stretches follow at residues 6206-6242 (ERSS…GSLI) and 6264-6283 (SVSD…LTDS). 2 stretches are compositionally biased toward polar residues: residues 6208–6226 (SSFQ…SPQN) and 6265–6283 (VSDN…LTDS).

It belongs to the G-protein coupled receptor 2 family. Adhesion G-protein coupled receptor (ADGR) subfamily. As to quaternary structure, forms a heterodimer, consisting of a large extracellular region (alpha subunit) non-covalently linked to a seven-transmembrane moiety (beta subunit). Interacts (via the cytoplasmic region) with PDZD7. Component of USH2 complex, composed of ADGRV1, PDZD7, USH2A and WHRN. Interacts with USH2A and WHRN. Interacts (via the cytoplasmic region) with MYO7A (via MyTH4-FERM domains). Autoproteolytically cleaved into 2 subunits, an extracellular alpha subunit and a seven-transmembrane subunit. In terms of tissue distribution, expressed by oligodendrocytes. In midbrain, enriched in the myelinated regions of the superior and inferior colliculi. In the cochlea, expressed in developing hair cells. Expressed by photoreceptors in the retina.

It is found in the cell membrane. The protein localises to the cell projection. The protein resides in the stereocilium membrane. It localises to the photoreceptor inner segment. Its subcellular location is the secreted. Functionally, G-protein coupled receptor which has an essential role in the development of hearing and vision. Couples to G-alpha(i)-proteins, GNAI1/2/3, G-alpha(q)-proteins, GNAQ, as well as G-alpha(s)-proteins, GNAS, inhibiting adenylate cyclase (AC) activity and cAMP production. Required for the hair bundle ankle formation, which connects growing stereocilia in developing cochlear hair cells of the inner ear. In response to extracellular calcium, activates kinases PKA and PKC to regulate myelination by inhibiting the ubiquitination of MAG, thus enhancing the stability of this protein in myelin-forming cells of the auditory pathway. In retina photoreceptors, the USH2 complex is required for the maintenance of periciliary membrane complex that seems to play a role in regulating intracellular protein transport. Involved in the regulation of bone metabolism. Cleaved ADGRV1 beta-subunit couples with G-alpha(i)-proteins, GNAI1/2/3, and constitutively inhibits adenylate cyclase (AC) activity with a stronger effect than full ADGRV1. This is Adhesion G-protein coupled receptor V1 from Mus musculus (Mouse).